The primary structure comprises 38 residues: uncharacterized protein (38 aa).

This is an uncharacterized protein from Saccharomyces cerevisiae (strain ATCC 204508 / S288c) (Baker's yeast).